Here is a 398-residue protein sequence, read N- to C-terminus: Probable aminomethyltransferase (398 aa).

This sequence belongs to the GcvT family. As to quaternary structure, the glycine cleavage system is composed of four proteins: P, T, L and H.

It carries out the reaction N(6)-[(R)-S(8)-aminomethyldihydrolipoyl]-L-lysyl-[protein] + (6S)-5,6,7,8-tetrahydrofolate = N(6)-[(R)-dihydrolipoyl]-L-lysyl-[protein] + (6R)-5,10-methylene-5,6,7,8-tetrahydrofolate + NH4(+). In terms of biological role, the glycine cleavage system catalyzes the degradation of glycine. This is Probable aminomethyltransferase from Thermococcus gammatolerans (strain DSM 15229 / JCM 11827 / EJ3).